A 674-amino-acid polypeptide reads, in one-letter code: DNA ligase (674 aa).

NAD(+)-binding positions include Asp-34–Asp-38, Ser-83–Leu-84, and Glu-114. Catalysis depends on Lys-116, which acts as the N6-AMP-lysine intermediate. The NAD(+) site is built by Arg-137, Glu-174, Lys-290, and Lys-314. Zn(2+)-binding residues include Cys-405, Cys-408, Cys-424, and Cys-429. Positions Gln-587–Phe-674 constitute a BRCT domain.

Belongs to the NAD-dependent DNA ligase family. LigA subfamily. Mg(2+) is required as a cofactor. The cofactor is Mn(2+).

The enzyme catalyses NAD(+) + (deoxyribonucleotide)n-3'-hydroxyl + 5'-phospho-(deoxyribonucleotide)m = (deoxyribonucleotide)n+m + AMP + beta-nicotinamide D-nucleotide.. DNA ligase that catalyzes the formation of phosphodiester linkages between 5'-phosphoryl and 3'-hydroxyl groups in double-stranded DNA using NAD as a coenzyme and as the energy source for the reaction. It is essential for DNA replication and repair of damaged DNA. This Endomicrobium trichonymphae protein is DNA ligase.